The following is a 173-amino-acid chain: Photosystem I assembly protein Ycf3 (173 aa).

TPR repeat units follow at residues 35–68 (AYIY…EENK), 72–105 (GETL…NPKQ), and 120–153 (GRYA…YPGG).

This sequence belongs to the Ycf3 family.

The protein resides in the cellular thylakoid membrane. Functionally, essential for the assembly of the photosystem I (PSI) complex. May act as a chaperone-like factor to guide the assembly of the PSI subunits. This chain is Photosystem I assembly protein Ycf3, found in Prochlorococcus marinus (strain MIT 9215).